The sequence spans 232 residues: Ion-translocating oxidoreductase complex subunit E (232 aa).

The next 6 membrane-spanning stretches (helical) occupy residues 12–31 (LWRN…LLAV), 39–59 (LGLG…VSAL), 69–89 (IPIY…LINA), 92–112 (FGLY…CIVI), 125–145 (ALAA…LLLL), and 182–202 (PFLL…MLVG).

Belongs to the NqrDE/RnfAE family. In terms of assembly, the complex is composed of six subunits: RnfA, RnfB, RnfC, RnfD, RnfE and RnfG.

Its subcellular location is the cell inner membrane. Functionally, part of a membrane-bound complex that couples electron transfer with translocation of ions across the membrane. The chain is Ion-translocating oxidoreductase complex subunit E from Sodalis glossinidius (strain morsitans).